The chain runs to 340 residues: Ketol-acid reductoisomerase (NADP(+)) (340 aa).

The region spanning 3 to 182 (VQMEYEKDVK…GAARVGLLET (180 aa)) is the KARI N-terminal Rossmann domain. NADP(+) contacts are provided by residues 26 to 29 (YGSQ), R49, S53, and 83 to 86 (DEIQ). Residue H108 is part of the active site. NADP(+) is bound at residue G134. Residues 183–328 (TYKEETEEDL…AELRKAMPFV (146 aa)) enclose the KARI C-terminal knotted domain. Mg(2+) contacts are provided by D191, E195, E227, and E231. S252 is a substrate binding site.

Belongs to the ketol-acid reductoisomerase family. Mg(2+) is required as a cofactor.

The catalysed reaction is (2R)-2,3-dihydroxy-3-methylbutanoate + NADP(+) = (2S)-2-acetolactate + NADPH + H(+). It catalyses the reaction (2R,3R)-2,3-dihydroxy-3-methylpentanoate + NADP(+) = (S)-2-ethyl-2-hydroxy-3-oxobutanoate + NADPH + H(+). It participates in amino-acid biosynthesis; L-isoleucine biosynthesis; L-isoleucine from 2-oxobutanoate: step 2/4. Its pathway is amino-acid biosynthesis; L-valine biosynthesis; L-valine from pyruvate: step 2/4. In terms of biological role, involved in the biosynthesis of branched-chain amino acids (BCAA). Catalyzes an alkyl-migration followed by a ketol-acid reduction of (S)-2-acetolactate (S2AL) to yield (R)-2,3-dihydroxy-isovalerate. In the isomerase reaction, S2AL is rearranged via a Mg-dependent methyl migration to produce 3-hydroxy-3-methyl-2-ketobutyrate (HMKB). In the reductase reaction, this 2-ketoacid undergoes a metal-dependent reduction by NADPH to yield (R)-2,3-dihydroxy-isovalerate. The polypeptide is Ketol-acid reductoisomerase (NADP(+)) (Streptococcus pneumoniae (strain CGSP14)).